The sequence spans 67 residues: Large ribosomal subunit protein eL24 (67 aa).

Positions 7, 10, 33, and 37 each coordinate Zn(2+). Residues Cys-7 to Cys-37 form a C4-type zinc finger.

This sequence belongs to the eukaryotic ribosomal protein eL24 family. In terms of assembly, part of the 50S ribosomal subunit. Forms a cluster with proteins L3 and L14. It depends on Zn(2+) as a cofactor.

Its function is as follows. Binds to the 23S rRNA. This Thermococcus sibiricus (strain DSM 12597 / MM 739) protein is Large ribosomal subunit protein eL24.